The chain runs to 133 residues: Capsid protein (133 aa).

This sequence belongs to the Leviviricetes capsid protein family. As to quaternary structure, homodimer. The capsid protein dimer binds to the viral RNA via an operator hairpin, but also many other RNA sequences in the viral genome.

It is found in the virion. Capsid protein self-assembles to form an icosahedral capsid with a T=3 symmetry, about 26 nm in diameter, and consisting of 89 capsid proteins dimers (178 capsid proteins). Involved in viral genome encapsidation through the interaction between a capsid protein dimer and the multiple packaging signals present in the RNA genome. Binding of the capsid proteins to the viral RNA induces a conformational change required for efficient T=3 shell formation. The capsid also contains 1 copy of the A2 maturation protein. In terms of biological role, acts as a translational repressor of viral replicase synthesis late in infection. This latter function is the result of capsid protein interaction with an RNA hairpin which contains the replicase ribosome-binding site. This Escherichia coli protein is Capsid protein.